A 35-amino-acid polypeptide reads, in one-letter code: Photosystem II reaction center protein M (35 aa).

Residues 7–27 (GFIATILFVLVPTVFLLILYI) traverse the membrane as a helical segment.

It belongs to the PsbM family. PSII is composed of 1 copy each of membrane proteins PsbA, PsbB, PsbC, PsbD, PsbE, PsbF, PsbH, PsbI, PsbJ, PsbK, PsbL, PsbM, PsbT, PsbX, PsbY, PsbZ, Psb30/Ycf12, peripheral proteins PsbO, CyanoQ (PsbQ), PsbU, PsbV and a large number of cofactors. It forms dimeric complexes.

It localises to the cellular thylakoid membrane. Its function is as follows. One of the components of the core complex of photosystem II (PSII). PSII is a light-driven water:plastoquinone oxidoreductase that uses light energy to abstract electrons from H(2)O, generating O(2) and a proton gradient subsequently used for ATP formation. It consists of a core antenna complex that captures photons, and an electron transfer chain that converts photonic excitation into a charge separation. This subunit is found at the monomer-monomer interface. In Crocosphaera subtropica (strain ATCC 51142 / BH68) (Cyanothece sp. (strain ATCC 51142)), this protein is Photosystem II reaction center protein M.